The chain runs to 224 residues: MDILLVEDDMTLFKELSEELEQWDFNVNGIDDFNDVMTKFESVNPAIVIMDVKLPKYDGFYWTRKIREVSNTPILFLSSRDNPMDQVMSMELGADDYVQKPFNTNVLIAKLQAIYRRVYQFSLDEKRVLSWQDAILDLSKDSINKEDHQIYLSKTEMIILEMLVKKQNQIVTRDTLITALWDDEAFVSDNTLTVNVNRLRKKLADIDMNDAIETKIGKGYMAHG.

Residues 2-115 form the Response regulatory domain; that stretch reads DILLVEDDMT…VLIAKLQAIY (114 aa). Asp51 carries the post-translational modification 4-aspartylphosphate. The segment at residues 126-224 is a DNA-binding region (ompR/PhoB-type); sequence KRVLSWQDAI…KIGKGYMAHG (99 aa).

Post-translationally, phosphorylated by GraS.

It is found in the cytoplasm. Member of the two-component regulatory system GraR/GraS involved in resistance against cationic antimicrobial peptides (CAMPs). The sequence is that of Response regulator protein GraR (graR) from Staphylococcus saprophyticus subsp. saprophyticus (strain ATCC 15305 / DSM 20229 / NCIMB 8711 / NCTC 7292 / S-41).